A 133-amino-acid chain; its full sequence is DNA-directed RNA polymerase subunit omega (133 aa).

The protein belongs to the RNA polymerase subunit omega family. As to quaternary structure, the RNAP catalytic core consists of 2 alpha, 1 beta, 1 beta' and 1 omega subunit. When a sigma factor is associated with the core the holoenzyme is formed, which can initiate transcription.

It carries out the reaction RNA(n) + a ribonucleoside 5'-triphosphate = RNA(n+1) + diphosphate. In terms of biological role, promotes RNA polymerase assembly. Latches the N- and C-terminal regions of the beta' subunit thereby facilitating its interaction with the beta and alpha subunits. This is DNA-directed RNA polymerase subunit omega from Brucella abortus (strain S19).